A 137-amino-acid polypeptide reads, in one-letter code: Small ribosomal subunit protein uS9 (137 aa).

The disordered stretch occupies residues 104 to 137; sequence PLKSEGYLTRDPRAKERKKYGLHKARKAPQYSKR. Over residues 118-137 the composition is skewed to basic residues; that stretch reads KERKKYGLHKARKAPQYSKR.

The protein belongs to the universal ribosomal protein uS9 family.

The protein is Small ribosomal subunit protein uS9 of Gloeothece citriformis (strain PCC 7424) (Cyanothece sp. (strain PCC 7424)).